Reading from the N-terminus, the 259-residue chain is Ribonuclease PH (259 aa).

Phosphate-binding positions include R88 and 126-128 (GTR).

Belongs to the RNase PH family. Homohexameric ring arranged as a trimer of dimers.

The enzyme catalyses tRNA(n+1) + phosphate = tRNA(n) + a ribonucleoside 5'-diphosphate. In terms of biological role, phosphorolytic 3'-5' exoribonuclease that plays an important role in tRNA 3'-end maturation. Removes nucleotide residues following the 3'-CCA terminus of tRNAs; can also add nucleotides to the ends of RNA molecules by using nucleoside diphosphates as substrates, but this may not be physiologically important. Probably plays a role in initiation of 16S rRNA degradation (leading to ribosome degradation) during starvation. The polypeptide is Ribonuclease PH (Mycobacterium avium (strain 104)).